We begin with the raw amino-acid sequence, 382 residues long: Mating-type protein a-1 (382 aa).

Residues 116–184 (IPRPPNAYIL…RLLLENPDYR (69 aa)) constitute a DNA-binding region (HMG box).

As to quaternary structure, binds in vitro to DNA containing a specific core sequence 5'-CTTTG-3'.

Its subcellular location is the nucleus. Functionally, mating type proteins are sequence specific DNA-binding proteins that act as master switches in yeast differentiation by controlling gene expression in a cell type-specific fashion. Transcriptional activator that induces the transcription of a-specific genes like mating factor mfa-1. Required for mating as an a-cell, blocking of heterokaryon formation (vegetative incompatibility) and for perithecium induction. The polypeptide is Mating-type protein a-1 (mta-1) (Neurospora crassa).